Here is a 184-residue protein sequence, read N- to C-terminus: Probable sensory rhodopsin transducer (184 aa).

Transmembrane regions (helical) follow at residues 14–34 (TLGVGAVLVLVLATLAVVNVY) and 52–72 (GLVSILLIVAVALLFVATIIG). The region spanning 73–125 (RERTAAVETLAAQARQIEQGELDVDLATNRTDDVGDIYRALAVLRDSEQLDRQ) is the HAMP domain.

It belongs to the methyl-accepting chemotaxis (MCP) protein family. As to quaternary structure, interacts with Xop2/SRM.

It is found in the membrane. The HtrM-Xop2/SRM complex may interact with CheB or CheR and modulate their availability to Sop1 or Sop2. The chain is Probable sensory rhodopsin transducer (htrM) from Haloarcula marismortui (strain ATCC 43049 / DSM 3752 / JCM 8966 / VKM B-1809) (Halobacterium marismortui).